Consider the following 361-residue polypeptide: mRNA export factor ICP27 homolog (361 aa).

Residues 1-15 show a composition bias toward low complexity; that stretch reads MEDSGNSSGSEASRS. Residues 1 to 107 are disordered; that stretch reads MEDSGNSSGS…SESARAAVSA (107 aa). Residues 16–36 show a composition bias toward basic and acidic residues; the sequence is GSEERRPVRERLGSRPPERRP. Positions 45–54 are RGG-box; the sequence is RRRRGGRGGR. Positions 80–99 are enriched in basic and acidic residues; the sequence is RQEADRPDGGPDAPPDRLSE. Positions 253, 328, 332, and 337 each coordinate Zn(2+). A CHC2-type zinc finger spans residues 253–337; the sequence is CYLRDTPVDE…HKTGCDAPTC (85 aa).

Belongs to the HHV-1 ICP27 protein family. As to quaternary structure, homodimer. Homodimerization is required for transactivation. Associates in a complex with RNA, and host export factors NXF1/TAP and ALYREF; these interactions allow nuclear export of viral transcripts. Interacts with three host shuttling SR proteins SRSF1, SRSF3 and SRSF7. Interacts with host SRPK1. Interacts with IE62; this interaction enhances IE62 transactivation.

Its subcellular location is the host cytoplasm. It localises to the host nucleus. Functionally, multifunctional regulator of the expression of viral genes that mediates nuclear export of viral intronless mRNAs. This immediate early (EI) protein promotes the nuclear export of viral intronless mRNAs by interacting with mRNAs and host NXF1/TAP. The chain is mRNA export factor ICP27 homolog from Suid herpesvirus 1 (strain Kaplan) (SuHV-1).